We begin with the raw amino-acid sequence, 141 residues long: Transcription antitermination protein NusB (141 aa).

The protein belongs to the NusB family.

Functionally, involved in transcription antitermination. Required for transcription of ribosomal RNA (rRNA) genes. Binds specifically to the boxA antiterminator sequence of the ribosomal RNA (rrn) operons. The protein is Transcription antitermination protein NusB of Clostridium botulinum (strain Loch Maree / Type A3).